Reading from the N-terminus, the 264-residue chain is 3-methyl-2-oxobutanoate hydroxymethyltransferase (264 aa).

Mg(2+)-binding residues include aspartate 45 and aspartate 84. Residues 45–46 (DS), aspartate 84, and lysine 112 each bind 3-methyl-2-oxobutanoate. Mg(2+) is bound at residue glutamate 114. Glutamate 181 (proton acceptor) is an active-site residue.

Belongs to the PanB family. As to quaternary structure, homodecamer; pentamer of dimers. Mg(2+) serves as cofactor.

Its subcellular location is the cytoplasm. The catalysed reaction is 3-methyl-2-oxobutanoate + (6R)-5,10-methylene-5,6,7,8-tetrahydrofolate + H2O = 2-dehydropantoate + (6S)-5,6,7,8-tetrahydrofolate. It participates in cofactor biosynthesis; (R)-pantothenate biosynthesis; (R)-pantoate from 3-methyl-2-oxobutanoate: step 1/2. In terms of biological role, catalyzes the reversible reaction in which hydroxymethyl group from 5,10-methylenetetrahydrofolate is transferred onto alpha-ketoisovalerate to form ketopantoate. This chain is 3-methyl-2-oxobutanoate hydroxymethyltransferase, found in Escherichia coli O7:K1 (strain IAI39 / ExPEC).